The following is a 633-amino-acid chain: MSYEFDENFDVIVVGAGHAGVEASLAAARMGCKVLLATINLEMLAFMPCNPSIGGSAKGIVVREIDALGGEMGKNIDKTYIQMKMLNTGKGPAVRALRAQADKALYAMTMKHTVECQENLTLRQSMVDEILVEDSKVVGVRTATNQKYGAKAVVVTTGTALRGEIIIGDLKYSSGPNNSLASVTLADNLKELGLEIGRFKTGTPPRVKASSINYEETEIQPGDEKPNHFSFLSKDEDYLQDQIPCWLTYTNQESHDIINNNLHRAPMFSGIVKGVGPRYCPSIEDKIVRFADKNRHQLFLEPEGRETEEVYVQGLSTSLPEDVQKELIHSIKGLEKAEMIRTGYAIEYDIVLPHQLRATLETKLISGLFTAGQTNGTSGYEEAAGQGLVAGINAALKVQGKPELILKRSDAYIGVMIDDLVTKGTLEPYRLLTSRAEYRLILRHDNADMRLTPIGREVGLVDDERWNIFKIKKNQFDRELTRLSKEKLKPIKETNEKIQALGFKPLTDAMTAKEFMRRPEIDYATATQFVGPAAEDLDAKVIELLETEIKYEGYINKALDQVAKMKRMEEKKIPENIDWDAIDSIATEARQKFKKINPETIGQASRISGVNPADISILMVYLEGNNKARRKVD.

FAD contacts are provided by residues 15–20, valine 127, and serine 182; that span reads GAGHAG. 276–290 provides a ligand contact to NAD(+); that stretch reads GPRYCPSIEDKIVRF. FAD is bound at residue glutamine 373.

It belongs to the MnmG family. Homodimer. Heterotetramer of two MnmE and two MnmG subunits. It depends on FAD as a cofactor.

It is found in the cytoplasm. Functionally, NAD-binding protein involved in the addition of a carboxymethylaminomethyl (cmnm) group at the wobble position (U34) of certain tRNAs, forming tRNA-cmnm(5)s(2)U34. The chain is tRNA uridine 5-carboxymethylaminomethyl modification enzyme MnmG from Streptococcus thermophilus (strain ATCC BAA-491 / LMD-9).